Here is a 94-residue protein sequence, read N- to C-terminus: Pyrimidine/purine nucleoside phosphorylase (94 aa).

Belongs to the nucleoside phosphorylase PpnP family.

It catalyses the reaction a purine D-ribonucleoside + phosphate = a purine nucleobase + alpha-D-ribose 1-phosphate. The catalysed reaction is adenosine + phosphate = alpha-D-ribose 1-phosphate + adenine. It carries out the reaction cytidine + phosphate = cytosine + alpha-D-ribose 1-phosphate. The enzyme catalyses guanosine + phosphate = alpha-D-ribose 1-phosphate + guanine. It catalyses the reaction inosine + phosphate = alpha-D-ribose 1-phosphate + hypoxanthine. The catalysed reaction is thymidine + phosphate = 2-deoxy-alpha-D-ribose 1-phosphate + thymine. It carries out the reaction uridine + phosphate = alpha-D-ribose 1-phosphate + uracil. The enzyme catalyses xanthosine + phosphate = alpha-D-ribose 1-phosphate + xanthine. Catalyzes the phosphorolysis of diverse nucleosides, yielding D-ribose 1-phosphate and the respective free bases. Can use uridine, adenosine, guanosine, cytidine, thymidine, inosine and xanthosine as substrates. Also catalyzes the reverse reactions. The sequence is that of Pyrimidine/purine nucleoside phosphorylase from Saccharophagus degradans (strain 2-40 / ATCC 43961 / DSM 17024).